We begin with the raw amino-acid sequence, 129 residues long: Protein Turandot C (129 aa).

An N-terminal signal peptide occupies residues 1-21 (MNASISLLCFALLLISPFCLG).

It belongs to the Turandot family.

Its subcellular location is the secreted. A humoral factor that may play a role in stress tolerance. The chain is Protein Turandot C from Drosophila sechellia (Fruit fly).